The chain runs to 126 residues: Small ribosomal subunit protein eS24 (126 aa).

Positions 98–126 (LYTKPQTSRKQRKEKKNRLKKAGKKTAKK) are disordered. Basic residues predominate over residues 104–126 (TSRKQRKEKKNRLKKAGKKTAKK).

The protein belongs to the eukaryotic ribosomal protein eS24 family.

This chain is Small ribosomal subunit protein eS24 (rps24), found in Dictyostelium discoideum (Social amoeba).